We begin with the raw amino-acid sequence, 344 residues long: Heat-inducible transcription repressor HrcA (344 aa).

The protein belongs to the HrcA family.

Negative regulator of class I heat shock genes (grpE-dnaK-dnaJ and groELS operons). Prevents heat-shock induction of these operons. This Streptococcus equi subsp. zooepidemicus (strain H70) protein is Heat-inducible transcription repressor HrcA.